The chain runs to 359 residues: 3-dehydroquinate synthase (359 aa).

Residues D72 to K77, G106 to D110, T130 to T131, K143, and K152 each bind NAD(+). Zn(2+) is bound by residues E185, H248, and H265.

The protein belongs to the sugar phosphate cyclases superfamily. Dehydroquinate synthase family. Co(2+) serves as cofactor. Requires Zn(2+) as cofactor. It depends on NAD(+) as a cofactor.

Its subcellular location is the cytoplasm. It carries out the reaction 7-phospho-2-dehydro-3-deoxy-D-arabino-heptonate = 3-dehydroquinate + phosphate. Its pathway is metabolic intermediate biosynthesis; chorismate biosynthesis; chorismate from D-erythrose 4-phosphate and phosphoenolpyruvate: step 2/7. In terms of biological role, catalyzes the conversion of 3-deoxy-D-arabino-heptulosonate 7-phosphate (DAHP) to dehydroquinate (DHQ). This is 3-dehydroquinate synthase from Thermodesulfovibrio yellowstonii (strain ATCC 51303 / DSM 11347 / YP87).